The chain runs to 187 residues: Elongation factor P 1 (187 aa).

Belongs to the elongation factor P family.

It localises to the cytoplasm. It participates in protein biosynthesis; polypeptide chain elongation. Functionally, involved in peptide bond synthesis. Stimulates efficient translation and peptide-bond synthesis on native or reconstituted 70S ribosomes in vitro. Probably functions indirectly by altering the affinity of the ribosome for aminoacyl-tRNA, thus increasing their reactivity as acceptors for peptidyl transferase. The sequence is that of Elongation factor P 1 from Geobacter sulfurreducens (strain ATCC 51573 / DSM 12127 / PCA).